The chain runs to 234 residues: Leucyl/phenylalanyl-tRNA--protein transferase (234 aa).

This sequence belongs to the L/F-transferase family.

The protein localises to the cytoplasm. The catalysed reaction is N-terminal L-lysyl-[protein] + L-leucyl-tRNA(Leu) = N-terminal L-leucyl-L-lysyl-[protein] + tRNA(Leu) + H(+). It catalyses the reaction N-terminal L-arginyl-[protein] + L-leucyl-tRNA(Leu) = N-terminal L-leucyl-L-arginyl-[protein] + tRNA(Leu) + H(+). The enzyme catalyses L-phenylalanyl-tRNA(Phe) + an N-terminal L-alpha-aminoacyl-[protein] = an N-terminal L-phenylalanyl-L-alpha-aminoacyl-[protein] + tRNA(Phe). Its function is as follows. Functions in the N-end rule pathway of protein degradation where it conjugates Leu, Phe and, less efficiently, Met from aminoacyl-tRNAs to the N-termini of proteins containing an N-terminal arginine or lysine. This chain is Leucyl/phenylalanyl-tRNA--protein transferase, found in Pectobacterium atrosepticum (strain SCRI 1043 / ATCC BAA-672) (Erwinia carotovora subsp. atroseptica).